The primary structure comprises 238 residues: 1-(5-phosphoribosyl)-5-[(5-phosphoribosylamino)methylideneamino] imidazole-4-carboxamide isomerase (238 aa).

D8 functions as the Proton acceptor in the catalytic mechanism. The active-site Proton donor is the D129.

The protein belongs to the HisA/HisF family.

It is found in the cytoplasm. The catalysed reaction is 1-(5-phospho-beta-D-ribosyl)-5-[(5-phospho-beta-D-ribosylamino)methylideneamino]imidazole-4-carboxamide = 5-[(5-phospho-1-deoxy-D-ribulos-1-ylimino)methylamino]-1-(5-phospho-beta-D-ribosyl)imidazole-4-carboxamide. Its pathway is amino-acid biosynthesis; L-histidine biosynthesis; L-histidine from 5-phospho-alpha-D-ribose 1-diphosphate: step 4/9. The chain is 1-(5-phosphoribosyl)-5-[(5-phosphoribosylamino)methylideneamino] imidazole-4-carboxamide isomerase from Lacticaseibacillus paracasei (strain ATCC 334 / BCRC 17002 / CCUG 31169 / CIP 107868 / KCTC 3260 / NRRL B-441) (Lactobacillus paracasei).